Here is a 194-residue protein sequence, read N- to C-terminus: RFKKIRRLGALPGLTSKRPRSGSDPKNQLRSGKKSQYRIRLEEKQKLRFHYGLTERQLLKYVHIAGKAKGSTGQVLLQLLEMRLDNILFRLGMASTIPGARQLVTHRHILVNGRIMDIPSYRCKPRDIITTKDKQRSKALIQNYIASSPQEELPNHLTIDPIQYKGLVNQIIDSKWIGLKINELLVVEYYSRQT.

Positions 13 to 36 (GLTSKRPRSGSDPKNQLRSGKKSQ) are disordered. The region spanning 82–143 (MRLDNILFRL…KQRSKALIQN (62 aa)) is the S4 RNA-binding domain.

Belongs to the universal ribosomal protein uS4 family. As to quaternary structure, part of the 30S ribosomal subunit. Contacts protein S5. The interaction surface between S4 and S5 is involved in control of translational fidelity.

Its subcellular location is the plastid. The protein localises to the chloroplast. In terms of biological role, one of the primary rRNA binding proteins, it binds directly to 16S rRNA where it nucleates assembly of the body of the 30S subunit. With S5 and S12 plays an important role in translational accuracy. This chain is Small ribosomal subunit protein uS4c (rps4), found in Moraea spathulata (Large yellow moraea).